A 318-amino-acid polypeptide reads, in one-letter code: NADH-ubiquinone oxidoreductase chain 1 (318 aa).

8 consecutive transmembrane segments (helical) span residues 2-22 (FTIN…FLTL), 70-90 (MFII…IPLP), 100-120 (LGVL…LWSG), 146-166 (LAII…STLI), 171-191 (HLWL…STLA), 222-242 (LFFM…TILF), 254-276 (LYTI…IRAS), and 294-314 (LPLT…TSSI).

Belongs to the complex I subunit 1 family. In terms of assembly, core subunit of respiratory chain NADH dehydrogenase (Complex I) which is composed of 45 different subunits.

The protein resides in the mitochondrion inner membrane. It carries out the reaction a ubiquinone + NADH + 5 H(+)(in) = a ubiquinol + NAD(+) + 4 H(+)(out). Functionally, core subunit of the mitochondrial membrane respiratory chain NADH dehydrogenase (Complex I) which catalyzes electron transfer from NADH through the respiratory chain, using ubiquinone as an electron acceptor. Essential for the catalytic activity and assembly of complex I. The protein is NADH-ubiquinone oxidoreductase chain 1 (MT-ND1) of Ceratotherium simum (White rhinoceros).